Consider the following 637-residue polypeptide: Threonine--tRNA ligase (637 aa).

The TGS domain maps to 1 to 61 (MITITLPDSS…ATDAAVRLIT (61 aa)). Residues 238 to 528 (DHRKLGAELD…LIEHFAGKFP (291 aa)) are catalytic. 3 residues coordinate Zn(2+): C329, H380, and H505.

It belongs to the class-II aminoacyl-tRNA synthetase family. In terms of assembly, homodimer. It depends on Zn(2+) as a cofactor.

It localises to the cytoplasm. It catalyses the reaction tRNA(Thr) + L-threonine + ATP = L-threonyl-tRNA(Thr) + AMP + diphosphate + H(+). Its function is as follows. Catalyzes the attachment of threonine to tRNA(Thr) in a two-step reaction: L-threonine is first activated by ATP to form Thr-AMP and then transferred to the acceptor end of tRNA(Thr). Also edits incorrectly charged L-seryl-tRNA(Thr). This is Threonine--tRNA ligase from Desulfosudis oleivorans (strain DSM 6200 / JCM 39069 / Hxd3) (Desulfococcus oleovorans).